The primary structure comprises 596 residues: ATP-dependent lipid A-core flippase (596 aa).

6 consecutive transmembrane segments (helical) span residues 34–54, 80–100, 138–158, 164–184, 263–283, and 292–312; these read VWVL…EAGI, AAVV…GYLL, AVVF…ITLV, VVFL…IVAI, QPLT…IAVV, and VGGF…LKHL. The ABC transmembrane type-1 domain occupies 38-321; that stretch reads VAGVLAMAAV…LMDVNQPLQR (284 aa). One can recognise an ABC transporter domain in the interval 353–589; that stretch reads IEFSHVSFSY…GGLYAHLHRI (237 aa). 389–396 provides a ligand contact to ATP; it reads GPSGSGKT.

Belongs to the ABC transporter superfamily. Lipid exporter (TC 3.A.1.106) family. In terms of assembly, homodimer.

The protein localises to the cell inner membrane. The enzyme catalyses ATP + H2O + lipid A-core oligosaccharideSide 1 = ADP + phosphate + lipid A-core oligosaccharideSide 2.. Functionally, involved in lipopolysaccharide (LPS) biosynthesis. Translocates lipid A-core from the inner to the outer leaflet of the inner membrane. Transmembrane domains (TMD) form a pore in the inner membrane and the ATP-binding domain (NBD) is responsible for energy generation. This Burkholderia mallei (strain ATCC 23344) protein is ATP-dependent lipid A-core flippase.